A 331-amino-acid chain; its full sequence is Major outer membrane protein P.IB (331 aa).

An N-terminal signal peptide occupies residues 1–19 (MKKSLIALTLAALPVAAMA).

This sequence belongs to the Gram-negative porin family. As to quaternary structure, homotrimer.

It localises to the cell outer membrane. In terms of biological role, serves as a slightly cation selective porin. The sequence is that of Major outer membrane protein P.IB (porB) from Neisseria meningitidis serogroup B.